We begin with the raw amino-acid sequence, 562 residues long: Urocanate hydratase (562 aa).

NAD(+) contacts are provided by residues G52 to G53, Q130, G176 to G178, E196, R201, N242 to A243, Q263 to H267, Y273 to L274, and Y322. Residue C410 is part of the active site. G492 is a binding site for NAD(+).

This sequence belongs to the urocanase family. It depends on NAD(+) as a cofactor.

The protein resides in the cytoplasm. The enzyme catalyses 4-imidazolone-5-propanoate = trans-urocanate + H2O. It functions in the pathway amino-acid degradation; L-histidine degradation into L-glutamate; N-formimidoyl-L-glutamate from L-histidine: step 2/3. Its function is as follows. Catalyzes the conversion of urocanate to 4-imidazolone-5-propionate. This is Urocanate hydratase from Shewanella pealeana (strain ATCC 700345 / ANG-SQ1).